Here is a 1279-residue protein sequence, read N- to C-terminus: ATP-dependent helicase/nuclease subunit A (1279 aa).

The 496-residue stretch at 4 to 499 (TKWTDEQRQA…VKLFKNFRSR (496 aa)) folds into the UvrD-like helicase ATP-binding domain. An ATP-binding site is contributed by 25-32 (AGAGAGKT). The UvrD-like helicase C-terminal domain occupies 526–853 (EEALKVGASY…RIMSIHKSKG (328 aa)).

It belongs to the helicase family. AddA subfamily. Heterodimer of AddA and AddB/RexB. Mg(2+) serves as cofactor.

The enzyme catalyses Couples ATP hydrolysis with the unwinding of duplex DNA by translocating in the 3'-5' direction.. It catalyses the reaction ATP + H2O = ADP + phosphate + H(+). Functionally, the heterodimer acts as both an ATP-dependent DNA helicase and an ATP-dependent, dual-direction single-stranded exonuclease. Recognizes the chi site generating a DNA molecule suitable for the initiation of homologous recombination. The AddA nuclease domain is required for chi fragment generation; this subunit has the helicase and 3' -&gt; 5' nuclease activities. This is ATP-dependent helicase/nuclease subunit A from Clostridium botulinum (strain Loch Maree / Type A3).